Here is a 257-residue protein sequence, read N- to C-terminus: Ribonuclease PH (257 aa).

Residues Arg88 and 126–128 contribute to the phosphate site; that span reads GTR.

This sequence belongs to the RNase PH family. Homohexameric ring arranged as a trimer of dimers.

The enzyme catalyses tRNA(n+1) + phosphate = tRNA(n) + a ribonucleoside 5'-diphosphate. Phosphorolytic 3'-5' exoribonuclease that plays an important role in tRNA 3'-end maturation. Removes nucleotide residues following the 3'-CCA terminus of tRNAs; can also add nucleotides to the ends of RNA molecules by using nucleoside diphosphates as substrates, but this may not be physiologically important. Probably plays a role in initiation of 16S rRNA degradation (leading to ribosome degradation) during starvation. This Nocardia farcinica (strain IFM 10152) protein is Ribonuclease PH.